The primary structure comprises 450 residues: Phosphoglucosamine mutase 2 (450 aa).

The active-site Phosphoserine intermediate is S101. S101, D245, D247, and D249 together coordinate Mg(2+). S101 bears the Phosphoserine mark.

The protein belongs to the phosphohexose mutase family. Mg(2+) serves as cofactor. Post-translationally, activated by phosphorylation.

The catalysed reaction is alpha-D-glucosamine 1-phosphate = D-glucosamine 6-phosphate. Catalyzes the conversion of glucosamine-6-phosphate to glucosamine-1-phosphate. This Shewanella frigidimarina (strain NCIMB 400) protein is Phosphoglucosamine mutase 2.